The chain runs to 255 residues: Major prion protein (255 aa).

The signal sequence occupies residues 1 to 24; that stretch reads MVKSHIGSWILVLFVAMWSDVGLC. The segment at 25 to 41 is interaction with ADGRG6; that stretch reads KKRPKPGGGWNTGGSRY. The interval 25–232 is interaction with GRB2, ERI3 and SYN1; that stretch reads KKRPKPGGGW…ESEAYYQRGA (208 aa). Residues 28-110 form a disordered region; sequence PKPGGGWNTG…QWNKPSKPKT (83 aa). Tandem repeats lie at residues 54–62, 63–70, 71–78, 79–86, and 87–94. The tract at residues 54–94 is 5 X 8 AA tandem repeats of P-H-G-G-G-W-G-Q; sequence PQGGGGWGQPHGGGWGQPHGGGWGQPHGGGWGQPHGGGGWG. Residues 55 to 97 show a composition bias toward gly residues; that stretch reads QGGGGWGQPHGGGWGQPHGGGWGQPHGGGWGQPHGGGGWGQGG. H64, G65, G66, H72, G73, G74, H80, G81, G82, H88, G90, and G91 together coordinate Cu(2+). Residues N174, N184, and N199 are each glycosylated (N-linked (GlcNAc...) asparagine). A disulfide bond links C182 and C216. A lipid anchor (GPI-anchor amidated alanine) is attached at A232. The propeptide at 233–255 is removed in mature form; that stretch reads SVILFSSPPVILLVSFLIFLIVG.

This sequence belongs to the prion family. Monomer and homodimer. Has a tendency to aggregate into amyloid fibrils containing a cross-beta spine, formed by a steric zipper of superposed beta-strands. Soluble oligomers may represent an intermediate stage on the path to fibril formation. Copper binding may promote oligomerization. Interacts with GRB2, APP, ERI3/PRNPIP and SYN1. Mislocalized cytosolically exposed PrP interacts with MGRN1; this interaction alters MGRN1 subcellular location and causes lysosomal enlargement. Interacts with APP. Interacts with KIAA1191. Interacts with ADGRG6.

The protein resides in the cell membrane. Its subcellular location is the golgi apparatus. Its primary physiological function is unclear. May play a role in neuronal development and synaptic plasticity. May be required for neuronal myelin sheath maintenance. May promote myelin homeostasis through acting as an agonist for ADGRG6 receptor. May play a role in iron uptake and iron homeostasis. Soluble oligomers are toxic to cultured neuroblastoma cells and induce apoptosis (in vitro). Association with GPC1 (via its heparan sulfate chains) targets PRNP to lipid rafts. Also provides Cu(2+) or Zn(2+) for the ascorbate-mediated GPC1 deaminase degradation of its heparan sulfate side chains. This is Major prion protein (PRNP) from Canis lupus familiaris (Dog).